Reading from the N-terminus, the 549-residue chain is Glucose-6-phosphate isomerase (549 aa).

Catalysis depends on glutamate 353, which acts as the Proton donor. Catalysis depends on residues histidine 384 and lysine 513.

Belongs to the GPI family.

Its subcellular location is the cytoplasm. The catalysed reaction is alpha-D-glucose 6-phosphate = beta-D-fructose 6-phosphate. It participates in carbohydrate biosynthesis; gluconeogenesis. It functions in the pathway carbohydrate degradation; glycolysis; D-glyceraldehyde 3-phosphate and glycerone phosphate from D-glucose: step 2/4. Functionally, catalyzes the reversible isomerization of glucose-6-phosphate to fructose-6-phosphate. The polypeptide is Glucose-6-phosphate isomerase (Brucella melitensis biotype 2 (strain ATCC 23457)).